A 429-amino-acid chain; its full sequence is GTPase Obg (429 aa).

One can recognise an Obg domain in the interval 1–158 (MLIDKCTLFL…IEAQFELKYI (158 aa)). One can recognise an OBG-type G domain in the interval 159 to 330 (ADVGLLGLPN…LLKDIFKDYK (172 aa)). GTP contacts are provided by residues 165-172 (GLPNAGKS), 190-194 (FTTLS), 211-214 (DIPG), 281-284 (NKID), and 311-313 (SGF). Residues Ser-172 and Thr-192 each coordinate Mg(2+). An OCT domain is found at 351 to 429 (KVEKEQEDIV…RIQDVMFEIN (79 aa)).

This sequence belongs to the TRAFAC class OBG-HflX-like GTPase superfamily. OBG GTPase family. As to quaternary structure, monomer. Requires Mg(2+) as cofactor.

It localises to the cytoplasm. Functionally, an essential GTPase which binds GTP, GDP and possibly (p)ppGpp with moderate affinity, with high nucleotide exchange rates and a fairly low GTP hydrolysis rate. Plays a role in control of the cell cycle, stress response, ribosome biogenesis and in those bacteria that undergo differentiation, in morphogenesis control. In Malacoplasma penetrans (strain HF-2) (Mycoplasma penetrans), this protein is GTPase Obg.